The chain runs to 498 residues: Protein flp (498 aa).

4 helical membrane-spanning segments follow: residues 6–26 (LYFL…IYIT), 389–409 (FNIV…FSAY), 433–453 (LSLC…YLIL), and 471–491 (LALI…LLFL).

Its subcellular location is the cell membrane. In terms of biological role, its precise function is unknown. Has no penicillin-binding activity and is not involved in methicillin resistance. In Staphylococcus aureus (strain NCTC 8325 / PS 47), this protein is Protein flp (flp).